Here is a 412-residue protein sequence, read N- to C-terminus: Serine hydroxymethyltransferase (412 aa).

(6S)-5,6,7,8-tetrahydrofolate-binding positions include Leu117 and 121–123 (GHL). The residue at position 226 (Lys226) is an N6-(pyridoxal phosphate)lysine. 349-351 (SPF) is a (6S)-5,6,7,8-tetrahydrofolate binding site.

The protein belongs to the SHMT family. As to quaternary structure, homodimer. Pyridoxal 5'-phosphate serves as cofactor.

The protein resides in the cytoplasm. It catalyses the reaction (6R)-5,10-methylene-5,6,7,8-tetrahydrofolate + glycine + H2O = (6S)-5,6,7,8-tetrahydrofolate + L-serine. Its pathway is one-carbon metabolism; tetrahydrofolate interconversion. It participates in amino-acid biosynthesis; glycine biosynthesis; glycine from L-serine: step 1/1. Functionally, catalyzes the reversible interconversion of serine and glycine with tetrahydrofolate (THF) serving as the one-carbon carrier. This reaction serves as the major source of one-carbon groups required for the biosynthesis of purines, thymidylate, methionine, and other important biomolecules. Also exhibits THF-independent aldolase activity toward beta-hydroxyamino acids, producing glycine and aldehydes, via a retro-aldol mechanism. In Nitratidesulfovibrio vulgaris (strain DSM 19637 / Miyazaki F) (Desulfovibrio vulgaris), this protein is Serine hydroxymethyltransferase.